The sequence spans 127 residues: Anti-adapter protein IraD (127 aa).

Belongs to the GpW/Gp25 family. IraD subfamily. Interacts with RssB.

Its subcellular location is the cytoplasm. Inhibits RpoS proteolysis by regulating RssB activity, thereby increasing the stability of the sigma stress factor RpoS during oxidative stress. Its effect on RpoS stability is due to its interaction with RssB, which probably blocks the interaction of RssB with RpoS, and the consequent delivery of the RssB-RpoS complex to the ClpXP protein degradation pathway. The protein is Anti-adapter protein IraD of Escherichia coli O6:K15:H31 (strain 536 / UPEC).